The primary structure comprises 189 residues: Probable nicotinate-nucleotide adenylyltransferase (189 aa).

Belongs to the NadD family.

It catalyses the reaction nicotinate beta-D-ribonucleotide + ATP + H(+) = deamido-NAD(+) + diphosphate. Its pathway is cofactor biosynthesis; NAD(+) biosynthesis; deamido-NAD(+) from nicotinate D-ribonucleotide: step 1/1. Its function is as follows. Catalyzes the reversible adenylation of nicotinate mononucleotide (NaMN) to nicotinic acid adenine dinucleotide (NaAD). This chain is Probable nicotinate-nucleotide adenylyltransferase, found in Bacillus cytotoxicus (strain DSM 22905 / CIP 110041 / 391-98 / NVH 391-98).